Reading from the N-terminus, the 104-residue chain is Flagellar hook-basal body complex protein FliE (104 aa).

It belongs to the FliE family.

The protein localises to the bacterial flagellum basal body. This Pectobacterium carotovorum subsp. carotovorum (strain PC1) protein is Flagellar hook-basal body complex protein FliE.